Reading from the N-terminus, the 556-residue chain is Protein misato homolog 1 (556 aa).

Position 41 is a phosphoserine (serine 41).

It belongs to the misato family.

It localises to the mitochondrion outer membrane. It is found in the cytoplasm. Functionally, involved in the regulation of mitochondrial distribution and morphology. Required for mitochondrial fusion and mitochondrial network formation. This is Protein misato homolog 1 (Msto1) from Mus musculus (Mouse).